A 310-amino-acid chain; its full sequence is Protein-methionine-sulfoxide reductase catalytic subunit MsrP (310 aa).

Residues 1 to 45 (MRKTSSPRIAPSEITPRDLYHDRRRFMQAAAGAAAAALWPHWLSA) constitute a signal peptide (tat-type signal). Residues Asn73, 76 to 77 (YE), Cys131, Thr166, Asn214, Arg219, and 230 to 232 (SAK) each bind Mo-molybdopterin.

The protein belongs to the MsrP family. In terms of assembly, heterodimer of a catalytic subunit (MsrP) and a heme-binding subunit (MsrQ). Mo-molybdopterin serves as cofactor. Predicted to be exported by the Tat system. The position of the signal peptide cleavage has not been experimentally proven.

It is found in the periplasm. It catalyses the reaction L-methionyl-[protein] + a quinone + H2O = L-methionyl-(S)-S-oxide-[protein] + a quinol. It carries out the reaction L-methionyl-[protein] + a quinone + H2O = L-methionyl-(R)-S-oxide-[protein] + a quinol. Functionally, part of the MsrPQ system that repairs oxidized periplasmic proteins containing methionine sulfoxide residues (Met-O), using respiratory chain electrons. Thus protects these proteins from oxidative-stress damage caused by reactive species of oxygen and chlorine generated by the host defense mechanisms. MsrPQ is essential for the maintenance of envelope integrity under bleach stress, rescuing a wide series of structurally unrelated periplasmic proteins from methionine oxidation. The catalytic subunit MsrP is non-stereospecific, being able to reduce both (R-) and (S-) diastereoisomers of methionine sulfoxide. The sequence is that of Protein-methionine-sulfoxide reductase catalytic subunit MsrP from Methylococcus capsulatus (strain ATCC 33009 / NCIMB 11132 / Bath).